The primary structure comprises 103 residues: Small ribosomal subunit protein bS18c (103 aa).

This sequence belongs to the bacterial ribosomal protein bS18 family. In terms of assembly, part of the 30S ribosomal subunit.

The protein localises to the plastid. It localises to the chloroplast. This chain is Small ribosomal subunit protein bS18c, found in Buxus microphylla (Littleleaf boxwood).